We begin with the raw amino-acid sequence, 287 residues long: MTLINKLKQHLSDSQITQAQLAREAGVNAGALSAYLNDNYKGNIADVEAKLAAYLEKKAVQAREFVEAPAFIETATSRQIFKTLEFAQIANCLATVYGMSGVGKTKAIQEFAKSHANVWLVTASPSRSSLSEILYEIALELGISDAPRRKGTLSRLIARKIKGTEGLLIVDEADHLPYEALEELRIMQEEAGIGLVLVGNDKVYTRMKGGISPSHEYARLWSRVAKNTSIQKTKKADTQAVAQAWGLETDEEALKVMQSITETGGGLRILTQTYACRNGSKRIWQVD.

Residues 7–62 form the HTH cro/C1-type domain; it reads LKQHLSDSQITQAQLAREAGVNAGALSAYLNDNYKGNIADVEAKLAAYLEKKAVQA. The H-T-H motif DNA-binding region spans 18–37; that stretch reads QAQLAREAGVNAGALSAYLN. 98 to 105 contributes to the ATP binding site; it reads GMSGVGKT.

This protein is a non-specific DNA-binding and ATP-hydrolyzing protein essential for bacteriophage integration and replication. This chain is Mu-like prophage FluMu DNA transposition protein B, found in Haemophilus influenzae (strain ATCC 51907 / DSM 11121 / KW20 / Rd).